The following is a 127-amino-acid chain: Major sperm protein 2 (127 aa).

Residue Ala-2 is modified to N-acetylalanine. Residues 9 to 126 enclose the MSP domain; that stretch reads DIHTQPGSKI…RRKNLPIEYN (118 aa).

As to expression, sperm.

Its subcellular location is the cell projection. The protein localises to the pseudopodium. The protein resides in the cytoplasm. It localises to the cytoskeleton. In terms of biological role, central component in molecular interactions underlying sperm crawling. Forms an extensive filament system that extends from sperm villipoda, along the leading edge of the pseudopod. The protein is Major sperm protein 2 of Onchocerca volvulus.